Reading from the N-terminus, the 308-residue chain is Ribosomal RNA small subunit methyltransferase H (308 aa).

S-adenosyl-L-methionine contacts are provided by residues 36–38 (GGH), aspartate 55, phenylalanine 86, aspartate 103, and glutamine 110.

This sequence belongs to the methyltransferase superfamily. RsmH family.

It is found in the cytoplasm. It carries out the reaction cytidine(1402) in 16S rRNA + S-adenosyl-L-methionine = N(4)-methylcytidine(1402) in 16S rRNA + S-adenosyl-L-homocysteine + H(+). Specifically methylates the N4 position of cytidine in position 1402 (C1402) of 16S rRNA. This chain is Ribosomal RNA small subunit methyltransferase H, found in Helicobacter pylori (strain B38).